The primary structure comprises 617 residues: RNA polymerase sigma factor RpoD (617 aa).

Residues Pro-170–Glu-220 form a disordered region. Basic and acidic residues predominate over residues Asn-184–Lys-195. Residues Asp-196–Pro-218 show a composition bias toward acidic residues. The interval Met-383–Thr-453 is sigma-70 factor domain-2. An Interaction with polymerase core subunit RpoC motif is present at residues Asp-407–Gln-410. Residues Glu-462–Met-538 form a sigma-70 factor domain-3 region. Residues Val-551–His-604 are sigma-70 factor domain-4. Positions Leu-577–Ala-596 form a DNA-binding region, H-T-H motif.

It belongs to the sigma-70 factor family. RpoD/SigA subfamily. Interacts transiently with the RNA polymerase catalytic core.

It is found in the cytoplasm. Functionally, sigma factors are initiation factors that promote the attachment of RNA polymerase to specific initiation sites and are then released. This sigma factor is the primary sigma factor during exponential growth. In Pseudomonas aeruginosa (strain ATCC 15692 / DSM 22644 / CIP 104116 / JCM 14847 / LMG 12228 / 1C / PRS 101 / PAO1), this protein is RNA polymerase sigma factor RpoD.